Consider the following 293-residue polypeptide: Ribosomal protein L11 methyltransferase (293 aa).

Residues Thr145, Gly166, Asp188, and Asn230 each contribute to the S-adenosyl-L-methionine site.

The protein belongs to the methyltransferase superfamily. PrmA family.

Its subcellular location is the cytoplasm. The enzyme catalyses L-lysyl-[protein] + 3 S-adenosyl-L-methionine = N(6),N(6),N(6)-trimethyl-L-lysyl-[protein] + 3 S-adenosyl-L-homocysteine + 3 H(+). Methylates ribosomal protein L11. This is Ribosomal protein L11 methyltransferase from Shewanella putrefaciens (strain CN-32 / ATCC BAA-453).